The primary structure comprises 291 residues: N-acetylmannosamine kinase (291 aa).

ATP-binding positions include alanine 5–lysine 12 and glycine 132–serine 139. Histidine 156, cysteine 166, cysteine 168, and cysteine 173 together coordinate Zn(2+).

It belongs to the ROK (NagC/XylR) family. NanK subfamily. As to quaternary structure, homodimer.

The catalysed reaction is an N-acyl-D-mannosamine + ATP = an N-acyl-D-mannosamine 6-phosphate + ADP + H(+). The protein operates within amino-sugar metabolism; N-acetylneuraminate degradation; D-fructose 6-phosphate from N-acetylneuraminate: step 2/5. Catalyzes the phosphorylation of N-acetylmannosamine (ManNAc) to ManNAc-6-P. The protein is N-acetylmannosamine kinase of Escherichia coli O6:K15:H31 (strain 536 / UPEC).